Here is a 510-residue protein sequence, read N- to C-terminus: MSNQSTNDQDQIPSAEDTNDLIAQRQAKLDEISAAGKIAYPNQFKRTDYAEDLQKQFEGITKQEIEENAANGGKTQVSIAGRVMLNRGAFIVIQDMTGRIQLYVARKELDEDSLALIKSLDLGDIIGVSGYIGRSGKGDLYVHIEQITLLTKSLRPMPNKFHGLADTEARYRNRHLDLMTNESSRNTFMIRSQVISGIRKFMLNERFMEVETPMMHPIPGGAVARPFITHHNALDMPLYLRIAPELYLKRLVVGGFERVFEINRSFRNEGVSTRHNPEFTMIEFYQAYADYKDLMDLTERLFNQLAMDILGTTELTYQEETISLKAPFARLSMTDAIAQYAEGFDMSKVADRDYLADYAQNVLKQQVKEGFGIGKLQTIIFEETAEHKLRQPTFITQYPAETSPLARRNDENPEITDRFELFIGGREIANGFSELNDPADQAERFHNQVAEKDAGDDEAMHFDADYIEALAYGLPPTAGEGIGIDRLVMLFTDAASIRDVILFPHMRIKH.

Mg(2+) is bound by residues glutamate 420 and glutamate 427.

Belongs to the class-II aminoacyl-tRNA synthetase family. Homodimer. It depends on Mg(2+) as a cofactor.

Its subcellular location is the cytoplasm. The catalysed reaction is tRNA(Lys) + L-lysine + ATP = L-lysyl-tRNA(Lys) + AMP + diphosphate. This Psychrobacter sp. (strain PRwf-1) protein is Lysine--tRNA ligase.